The chain runs to 471 residues: Tryptophanase (471 aa).

Lys270 carries the post-translational modification N6-(pyridoxal phosphate)lysine.

The protein belongs to the beta-eliminating lyase family. Homotetramer. The cofactor is pyridoxal 5'-phosphate.

It carries out the reaction L-tryptophan + H2O = indole + pyruvate + NH4(+). Its pathway is amino-acid degradation; L-tryptophan degradation via pyruvate pathway; indole and pyruvate from L-tryptophan: step 1/1. This is Tryptophanase from Histophilus somni (strain 2336) (Haemophilus somnus).